A 149-amino-acid chain; its full sequence is Large ribosomal subunit protein bL9 (149 aa).

This sequence belongs to the bacterial ribosomal protein bL9 family.

In terms of biological role, binds to the 23S rRNA. The polypeptide is Large ribosomal subunit protein bL9 (Helicobacter pylori (strain ATCC 700392 / 26695) (Campylobacter pylori)).